The following is a 198-amino-acid chain: Probable molybdenum cofactor guanylyltransferase (198 aa).

Residues 9-11 (LAG), Lys-22, Asp-66, and Asp-95 each bind GTP. Position 95 (Asp-95) interacts with Mg(2+).

The protein belongs to the MobA family. Mg(2+) serves as cofactor.

The protein resides in the cytoplasm. It carries out the reaction Mo-molybdopterin + GTP + H(+) = Mo-molybdopterin guanine dinucleotide + diphosphate. Transfers a GMP moiety from GTP to Mo-molybdopterin (Mo-MPT) cofactor (Moco or molybdenum cofactor) to form Mo-molybdopterin guanine dinucleotide (Mo-MGD) cofactor. This Clostridium perfringens (strain 13 / Type A) protein is Probable molybdenum cofactor guanylyltransferase.